The primary structure comprises 328 residues: uncharacterized protein (328 aa).

A signal peptide spans 1 to 25 (MKLFNFKKLSMLIAGFTLVTSPALA).

This sequence belongs to the bacterial solute-binding protein 7 family.

The protein localises to the periplasm. This is an uncharacterized protein from Haemophilus influenzae (strain ATCC 51907 / DSM 11121 / KW20 / Rd).